The primary structure comprises 207 residues: Large ribosomal subunit protein uL4 (207 aa).

Residues 49 to 78 (HAVKNRSAVSGGGRKPWRQKGTGRARQGSI) are disordered.

The protein belongs to the universal ribosomal protein uL4 family. Part of the 50S ribosomal subunit.

In terms of biological role, one of the primary rRNA binding proteins, this protein initially binds near the 5'-end of the 23S rRNA. It is important during the early stages of 50S assembly. It makes multiple contacts with different domains of the 23S rRNA in the assembled 50S subunit and ribosome. Functionally, forms part of the polypeptide exit tunnel. The polypeptide is Large ribosomal subunit protein uL4 (rplD) (Streptococcus pyogenes serotype M1).